The following is a 437-amino-acid chain: Serine carboxypeptidase-like 7 (437 aa).

The first 25 residues, 1 to 25, serve as a signal peptide directing secretion; that stretch reads MANDYVSTVLLLLSLLIFLSQRTDS. 3 disulfides stabilise this stretch: C84/C327, C248/C262, and C286/C293. N-linked (GlcNAc...) asparagine glycosylation is present at N105. S180 is a catalytic residue. Residue N346 is glycosylated (N-linked (GlcNAc...) asparagine). D362 is an active-site residue. N378 carries an N-linked (GlcNAc...) asparagine glycan. Residue H415 is part of the active site.

Belongs to the peptidase S10 family. As to expression, ubiquitous.

The protein localises to the secreted. In terms of biological role, probable carboxypeptidase. In Arabidopsis thaliana (Mouse-ear cress), this protein is Serine carboxypeptidase-like 7 (SCPL7).